The primary structure comprises 192 residues: 7-methyl-GTP pyrophosphatase (192 aa).

Aspartate 69 functions as the Proton acceptor in the catalytic mechanism.

This sequence belongs to the Maf family. YceF subfamily. Requires a divalent metal cation as cofactor.

The protein resides in the cytoplasm. It catalyses the reaction N(7)-methyl-GTP + H2O = N(7)-methyl-GMP + diphosphate + H(+). Nucleoside triphosphate pyrophosphatase that hydrolyzes 7-methyl-GTP (m(7)GTP). May have a dual role in cell division arrest and in preventing the incorporation of modified nucleotides into cellular nucleic acids. In Pseudomonas fluorescens (strain ATCC BAA-477 / NRRL B-23932 / Pf-5), this protein is 7-methyl-GTP pyrophosphatase.